A 542-amino-acid chain; its full sequence is Chaperonin GroEL 2 (542 aa).

Residues 30–33, Lys51, 87–91, Gly415, and Asp496 each bind ATP; these read TLGP and DGTTT.

Belongs to the chaperonin (HSP60) family. In terms of assembly, forms a cylinder of 14 subunits composed of two heptameric rings stacked back-to-back. Interacts with the co-chaperonin GroES.

The protein resides in the cytoplasm. The catalysed reaction is ATP + H2O + a folded polypeptide = ADP + phosphate + an unfolded polypeptide.. Its function is as follows. Together with its co-chaperonin GroES, plays an essential role in assisting protein folding. The GroEL-GroES system forms a nano-cage that allows encapsulation of the non-native substrate proteins and provides a physical environment optimized to promote and accelerate protein folding. The polypeptide is Chaperonin GroEL 2 (Chelativorans sp. (strain BNC1)).